The primary structure comprises 636 residues: Signal recognition particle receptor subunit alpha (636 aa).

3 disordered regions span residues 132-205 (APTT…ELSK), 217-246 (IQKH…APRV), and 280-314 (IRGT…TKGT). Basic and acidic residues-rich tracts occupy residues 137–146 (KKFEDSEKAK) and 153–165 (IETR…EKAK). At S177 the chain carries Phosphoserine. Positions 217 to 238 (IQKHGKGLDKSSKSTKSDTPKE) are enriched in basic and acidic residues. The residue at position 283 (T283) is a Phosphothreonine. Residues S295, S296, and S297 each carry the phosphoserine modification. The span at 302–312 (ATQNTKPSATK) shows a compositional bias: polar residues. Position 303 is a phosphothreonine (T303). Residues 417–634 (YVVTFCGVNG…NAKAVVAALM (218 aa)) form an NG domain region. GTP is bound by residues 423–430 (GVNGVGKS) and 518–522 (DTAGR). T576 carries the phosphothreonine modification. Residue 586-589 (TKFD) coordinates GTP.

The protein belongs to the GTP-binding SRP family. As to quaternary structure, heterodimer with SRPRB. Interacts with the signal recognition particle (SRP) complex subunit SRP54.

The protein resides in the endoplasmic reticulum membrane. Component of the SRP (signal recognition particle) receptor. Ensures, in conjunction with the signal recognition particle, the correct targeting of the nascent secretory proteins to the endoplasmic reticulum membrane system. Forms a guanosine 5'-triphosphate (GTP)-dependent complex with the SRP subunit SRP54. SRP receptor compaction and GTPase rearrangement drive SRP-mediated cotranslational protein translocation into the ER. This is Signal recognition particle receptor subunit alpha from Mus musculus (Mouse).